The primary structure comprises 225 residues: Thylakoid lumenal 17.9 kDa protein, chloroplastic (225 aa).

The protein localises to the plastid. It localises to the chloroplast thylakoid lumen. In Arabidopsis thaliana (Mouse-ear cress), this protein is Thylakoid lumenal 17.9 kDa protein, chloroplastic.